Here is a 287-residue protein sequence, read N- to C-terminus: Bifunctional protein FolD (287 aa).

Residues 166-168 (GAS) and isoleucine 232 contribute to the NADP(+) site.

This sequence belongs to the tetrahydrofolate dehydrogenase/cyclohydrolase family. As to quaternary structure, homodimer.

It carries out the reaction (6R)-5,10-methylene-5,6,7,8-tetrahydrofolate + NADP(+) = (6R)-5,10-methenyltetrahydrofolate + NADPH. The catalysed reaction is (6R)-5,10-methenyltetrahydrofolate + H2O = (6R)-10-formyltetrahydrofolate + H(+). The protein operates within one-carbon metabolism; tetrahydrofolate interconversion. Functionally, catalyzes the oxidation of 5,10-methylenetetrahydrofolate to 5,10-methenyltetrahydrofolate and then the hydrolysis of 5,10-methenyltetrahydrofolate to 10-formyltetrahydrofolate. This chain is Bifunctional protein FolD, found in Aeromonas hydrophila subsp. hydrophila (strain ATCC 7966 / DSM 30187 / BCRC 13018 / CCUG 14551 / JCM 1027 / KCTC 2358 / NCIMB 9240 / NCTC 8049).